The sequence spans 187 residues: Peptidyl-tRNA hydrolase (187 aa).

Tyr-18 contacts tRNA. His-23 (proton acceptor) is an active-site residue. Positions 65, 67, and 113 each coordinate tRNA.

This sequence belongs to the PTH family. As to quaternary structure, monomer.

Its subcellular location is the cytoplasm. It catalyses the reaction an N-acyl-L-alpha-aminoacyl-tRNA + H2O = an N-acyl-L-amino acid + a tRNA + H(+). Functionally, hydrolyzes ribosome-free peptidyl-tRNAs (with 1 or more amino acids incorporated), which drop off the ribosome during protein synthesis, or as a result of ribosome stalling. In terms of biological role, catalyzes the release of premature peptidyl moieties from peptidyl-tRNA molecules trapped in stalled 50S ribosomal subunits, and thus maintains levels of free tRNAs and 50S ribosomes. In Coxiella burnetii (strain CbuK_Q154) (Coxiella burnetii (strain Q154)), this protein is Peptidyl-tRNA hydrolase.